The chain runs to 328 residues: Embigin (328 aa).

The N-terminal stretch at 1 to 33 (MRSHTGLRALVAPGCSLLLLYLLAATRPDRAVG) is a signal peptide. The Extracellular portion of the chain corresponds to 34–264 (DPADSAFTSL…VLSFMVPLKP (231 aa)). Residues N55, N62, N75, N100, N117, N189, N196, N214, and N219 are each glycosylated (N-linked (GlcNAc...) asparagine). Ig-like domains follow at residues 67-160 (EQTR…RVPK) and 159-254 (PKVH…IKLV). Intrachain disulfides connect C88/C144 and C180/C238. A helical membrane pass occupies residues 265–285 (FLAIIAEVILLVAIILLCEVY). Residues 286 to 328 (TQKKKNDPDDGKEFEQIEQLKSDDSNGIENNVPRYRKTDSGDQ) are Cytoplasmic-facing. The segment covering 289–309 (KKNDPDDGKEFEQIEQLKSDD) has biased composition (basic and acidic residues). Positions 289 to 328 (KKNDPDDGKEFEQIEQLKSDDSNGIENNVPRYRKTDSGDQ) are disordered. Position 310 is a phosphoserine (S310).

In terms of assembly, interacts with SLC16A1, SLC16A6 and SLC16A7. N-glycosylated. Detected in prostate, mammary gland and erythrocytes (at protein level). Detected in testis, brain, prostate, heart, kidney, liver, mammary gland and lung.

It localises to the cell membrane. Its subcellular location is the synapse. Functionally, plays a role in the outgrowth of motoneurons and in the formation of neuromuscular junctions. Following muscle denervation, promotes nerve terminal sprouting and the formation of additional acetylcholine receptor clusters at synaptic sites without affecting terminal Schwann cell number or morphology. Delays the retraction of terminal sprouts following re-innervation of denervated endplates. Plays a role in targeting the monocarboxylate transporters SLC16A1, SLC16A6 and SLC16A7 to the cell membrane. The chain is Embigin (Emb) from Rattus norvegicus (Rat).